Reading from the N-terminus, the 562-residue chain is MFPLIILISFSFTFLSASATSGAGEGVANLSTCLINHNVHNFSMYPTSRNYFNLLDFSLQNLRFAASNMPKPTVIILPNSKEELVSTILCCRQTSYEIRVRCGGHSYEGTSSVSFDGSPFVIIDLMKLDDVSVDLDSETAWAQGGATIGQIYYAIAKASDVHAFSAGSGPTVGSGGHISGGGFGLLSRKFGVAADSVVDALLIDADGRLLDRKAMGEDVFWAIRGGGGGNWGIIYAWKIRLVKVPKIVTTFKISKPGSKQYVAPLLYKWQIVAPNLADDFTLGVQMIPIDLPADMKYGNPTPIEICPQFNGLYLGPKTEAVSILNEAFPELNVKNDDAKEMTWIESALFFSDLDNIFGNSSDDISHLKERYLGVKICFKGKSDYVKTPFSMDGIMTALVEHEKNPNAFLVFDPYGGAMDKISAQAIAFPHRKGNLFAIQYYAQWNEEDDAKSNEHIEWIRGFYNKMAPFVSSSPRGAYVNYLDMDLGMNMDDDYLLRNASSRYSSSVDAVERARAWGEKYFLNNYDRLVKAKTKIDPLNVFRHEQSIPPTLGSTQEHNYSSE.

An N-terminal signal peptide occupies residues 1–19; sequence MFPLIILISFSFTFLSASA. N-linked (GlcNAc...) asparagine glycosylation is found at N29 and N41. Residues C33 and C90 are joined by a disulfide bond. The region spanning 68 to 244 is the FAD-binding PCMH-type domain; sequence NMPKPTVIIL…YAWKIRLVKV (177 aa). H105 is modified (pros-8alpha-FAD histidine). N359, N498, and N558 each carry an N-linked (GlcNAc...) asparagine glycan.

It belongs to the oxygen-dependent FAD-linked oxidoreductase family. FAD is required as a cofactor. Mostly expressed in roots.

The protein resides in the vacuole. It functions in the pathway alkaloid biosynthesis; nicotine biosynthesis. Functionally, involved in the biosynthesis of pyridine alkaloid natural products, leading mainly to the production of anabasine, anatabine, nicotine and nornicotine, effective deterrents against herbivores with antiparasitic and pesticide properties (neurotoxins); nornicotine serves as the precursor in the synthesis of the carcinogen compound N'-nitrosonornicotine (NNN). Catalyzes a late oxidation step subsequent to the pyridine ring condensation reaction in the biosynthesis of alkaloids. This chain is Berberine bridge enzyme-like C-1, found in Nicotiana tabacum (Common tobacco).